The following is a 367-amino-acid chain: Mannan endo-1,4-beta-mannosidase (367 aa).

The signal sequence occupies residues 1 to 17; it reads MLLTALAVLFASTGCQA. Tryptophan 79 and asparagine 176 together coordinate substrate. Glutamate 177 acts as the Proton donor in catalysis. Cysteine 192 and cysteine 259 are disulfide-bonded. Substrate-binding residues include tryptophan 205, tryptophan 240, and tyrosine 279. Glutamate 308 (nucleophile) is an active-site residue. Residue tryptophan 337 participates in substrate binding.

In terms of assembly, monomer. In terms of processing, the disulfide bond between Cys-192 and Cys-259 has not been observed in X-ray crystallography. This may be a consequence of the X-ray radiation.

The enzyme catalyses Random hydrolysis of (1-&gt;4)-beta-D-mannosidic linkages in mannans, galactomannans and glucomannans.. Functionally, hydrolyzes 1,4-beta linked polysaccharide backbones of mannans. Hydrolyzes mannohexaose (M6) preferentially to mannotriose (M4) and less preferentially to mannotetraose (M3), mannopentaose (M5), and mannobiose (M2); hydrolyzes M5 preferentially to M2, and M3, and less preferentially to mannotetraose M4; hydrolyzes M4 preferentially to M3, and less preferentially to mannose (M1), plus very little M2. Does not hydrolyze mannobiose or mannotriose. Does not hydrolyze xlyan, starch, cellulose or galactose. The chain is Mannan endo-1,4-beta-mannosidase from Mytilus edulis (Blue mussel).